A 273-amino-acid polypeptide reads, in one-letter code: uncharacterized protein (273 aa).

Basic residues predominate over residues Met-1 to Pro-10. Disordered regions lie at residues Met-1 to Asn-32 and Glu-50 to Pro-124. Composition is skewed to polar residues over residues Lys-12 to Ala-24, Gln-55 to Leu-64, and Pro-92 to Pro-124. A Phosphoserine modification is found at Ser-123.

The protein localises to the nucleus. It localises to the cytoplasm. It is found in the cytoskeleton. The protein resides in the spindle. This is an uncharacterized protein from Schizosaccharomyces pombe (strain 972 / ATCC 24843) (Fission yeast).